Here is a 169-residue protein sequence, read N- to C-terminus: Disulfide bond formation protein B (169 aa).

At 1–14 the chain is on the cytoplasmic side; that stretch reads MMRFLNHCSQGRSA. A helical membrane pass occupies residues 15 to 31; the sequence is WLLMILTALILESSALY. Over 32–49 the chain is Periplasmic; it reads FQHVMKLQPCVMCIYERV. An intrachain disulfide couples Cys-41 to Cys-44. A helical transmembrane segment spans residues 50 to 65; the sequence is ALFGVLSAGILGVIAP. Residues 66-71 are Cytoplasmic-facing; the sequence is KTPLRW. A helical membrane pass occupies residues 72 to 89; that stretch reads LAIILWIYSAWGGLQLAW. Residues 90-144 are Periplasmic-facing; it reads QHTMMQLHPSPFNTCDFFVNFPSWLALNQWLPSVFEATGDCSVRQWQFLTLEMPQ. Cys-104 and Cys-130 are joined by a disulfide. A helical membrane pass occupies residues 145-163; the sequence is WLVGIFAAYLVVAALVLIS. Residues 164 to 169 are Cytoplasmic-facing; sequence QFFSRK.

Belongs to the DsbB family.

It is found in the cell inner membrane. Its function is as follows. Required for disulfide bond formation in some periplasmic proteins. Acts by oxidizing the DsbA protein. The chain is Disulfide bond formation protein B from Photorhabdus laumondii subsp. laumondii (strain DSM 15139 / CIP 105565 / TT01) (Photorhabdus luminescens subsp. laumondii).